A 308-amino-acid polypeptide reads, in one-letter code: ADP,ATP carrier protein (308 aa).

3 Solcar repeats span residues 6-99 (KNFM…FKRM), 110-203 (KWFA…LKPV), and 211-297 (NNFL…LQVI). 5 consecutive transmembrane segments (helical) span residues 8-35 (FMVDFLAGGLSAAVSKTAAAPIERVKLL), 76-100 (TANVIRYFPTQALNFAFKDKFKRMF), 108-128 (YWKWFAGNMASGGAAGAVSLS), 179-200 (FNISCVGIVVYRGLYFGMYDSL), and 214-234 (LAAFLLGWGITIGAGLASYPI). Arginine 81 and lysine 93 together coordinate ADP. Residue arginine 238 participates in ADP binding. Residues 238–243 (RRRMMM) are important for transport activity. Positions 238-243 (RRRMMM) match the Nucleotide carrier signature motif motif. A helical membrane pass occupies residues 274–294 (AGANILRAVAGAGVLAGYDQL).

Belongs to the mitochondrial carrier (TC 2.A.29) family. Monomer.

Its subcellular location is the mitochondrion inner membrane. It carries out the reaction ADP(in) + ATP(out) = ADP(out) + ATP(in). The matrix-open state (m-state) is inhibited by the membrane-permeable bongkrekic acid (BKA). The cytoplasmic-open state (c-state) is inhibited by the membrane-impermeable toxic inhibitor carboxyatractyloside (CATR). ADP:ATP antiporter that mediates import of ADP into the mitochondrial matrix for ATP synthesis, and export of ATP out to fuel the cell. Cycles between the cytoplasmic-open state (c-state) and the matrix-open state (m-state): operates by the alternating access mechanism with a single substrate-binding site intermittently exposed to either the cytosolic (c-state) or matrix (m-state) side of the inner mitochondrial membrane. This is ADP,ATP carrier protein (ABT) from Chlamydomonas reinhardtii (Chlamydomonas smithii).